A 2460-amino-acid polypeptide reads, in one-letter code: Reducing polyketide synthase BOA6 (2460 aa).

The region spanning 5 to 438 is the Ketosynthase family 3 (KS3) domain; the sequence is NEPIAVIGTG…GTNAHAILES (434 aa). Catalysis depends on for beta-ketoacyl synthase activity residues Cys178, His317, and His360. The tract at residues 549–864 is malonyl-CoA:ACP transacylase (MAT) domain; sequence VFTGQGAQWP…PYTGVLSRGD (316 aa). An N-terminal hotdog fold region spans residues 938 to 1073; that stretch reads HELLGVRCAD…GRIKMTLGTP (136 aa). The interval 938–1244 is dehydratase (DH) domain; the sequence is HELLGVRCAD…QMQSFTAARP (307 aa). Residues 938 to 1245 form the PKS/mFAS DH domain; sequence HELLGVRCAD…MQSFTAARPS (308 aa). His970 acts as the Proton acceptor; for dehydratase activity in catalysis. Residues 1088–1245 are C-terminal hotdog fold; sequence LGPLNVDRFY…MQSFTAARPS (158 aa). Asp1145 acts as the Proton donor; for dehydratase activity in catalysis. The tract at residues 1399-1586 is methyltransferase (MT) domain; sequence NKFVTAAMKK…VNDFKDKSRY (188 aa). Residues 2098–2266 form a ketoreductase (KR) domain region; sequence SYLLAGLTGD…KRGGVASVIH (169 aa). In terms of domain architecture, Carrier spans 2378-2456; the sequence is DEVLGVMQKC…DLCELACEEY (79 aa). Ser2416 bears the O-(pantetheine 4'-phosphoryl)serine mark.

It functions in the pathway polyketide biosynthesis. Reducing polyketide synthase; part of the gene cluster A that mediates the biosynthesis of botcinic acid and its botcinin derivatives, acetate-derived polyketides that contribute to virulence when combined with the sesquiterpene botrydial. Botcinic acid and its derivatives have been shown to induce chlorosis and necrosis during host plant infection, but also have antifungal activities. Two polyketide synthases, BOA6 and BOA9, are involved in the biosynthesis of botcinins. BOA6 mediates the formation of the per-methylated tetraketide core by condensation of four units of malonyl-CoA with one unit of acetyl-CoA, which would be methylated in activated methylene groups to yield a bicyclic acid intermediate that could then either be converted to botrylactone derivatives or lose the starter acetate unit through a retro-Claisen type C-C bond cleavage to yield botcinin derivatives. The second polyketide synthase, BOA9, is probably required for the biosynthesis of the tetraketide side chain of botcinins. The methyltransferase (MT) domain within BOA6 is probably responsible for the incorporation of four methyl groups. The trans-enoyl reductase BOA5 might take over the enoyl reductase function of BOA6 that misses an ER domain. The monooxygenases BOA2, BOA3 and BOA4 might be involved in further hydroxylations at C4, C5 and C8, whereas BOA7, close to BOA9, could potentially be involved in the hydroxylation at C4 in the side chain of botcinins. This chain is Reducing polyketide synthase BOA6, found in Botryotinia fuckeliana (strain B05.10) (Noble rot fungus).